A 1210-amino-acid polypeptide reads, in one-letter code: Ice nucleation protein (1210 aa).

The tract at residues 165–1156 is octapeptide periodicity; the sequence is AVYGSTLTGA…LSGGENSTLI (992 aa).

This sequence belongs to the bacterial ice nucleation protein family.

It localises to the cell outer membrane. Functionally, ice nucleation proteins enable bacteria to nucleate crystallization in supercooled water. This Pseudomonas fluorescens protein is Ice nucleation protein (inaW).